A 2120-amino-acid chain; its full sequence is Alpha-tectorin (2120 aa).

A signal peptide spans 1–24; sequence MNTRSLLSAWAALLVVTVRHRAHA. Residues Asn34, Asn215, Asn258, Asn277, Asn445, and Asn496 are each glycosylated (N-linked (GlcNAc...) asparagine). An NIDO domain is found at 98–252; the sequence is PFCGDVANGI…GRWAFKIDGR (155 aa). Positions 260 to 312 constitute a VWFC domain; that stretch reads SLRGQFLHQGEIFWENSNCSTKCRCLDFNNEIFCQEMLAPFETVEPKIKFFQC. Positions 317-490 constitute a VWFD 1 domain; that stretch reads TACVVFGDPH…RVPHPERKCS (174 aa). Intrachain disulfides connect Cys319–Cys451 and Cys341–Cys489. The TIL 1 domain maps to 578–620; that stretch reads PGHSHYSGCASGCPATCSDLTAPLRCTAPCPEGCECDDGHVLS. Asn666, Asn792, Asn822, Asn834, Asn877, Asn899, Asn907, and Asn928 each carry an N-linked (GlcNAc...) asparagine glycan. Positions 690 to 865 constitute a VWFD 2 domain; sequence GLCSVGQNQV…SWTTFDEICN (176 aa). An intrachain disulfide couples Cys692 to Cys828. In terms of domain architecture, TIL 2 spans 963–1013; sequence CPENSHFEECMSCVETCETLATGCCMDTCTEGCQCDEGFALRSPCVPRGEC. N-linked (GlcNAc...) asparagine glycosylation is found at Asn1025, Asn1041, Asn1207, and Asn1337. In terms of domain architecture, VWFD 3 spans 1066-1250; the sequence is ASCIVSGYGH…SWAKRDTFCR (185 aa). 2 cysteine pairs are disulfide-bonded: Cys1068–Cys1213 and Cys1090–Cys1249. Positions 1345–1398 constitute a TIL 3 domain; that stretch reads CPPNSHYESCVSLCQPRCAAIRLKSDCGHYCVEGCQCDPGYVLNGKSCILPQNC. A VWFD 4 domain is found at 1458–1633; sequence SFCLAAGGGV…KTNGMQKSCN (176 aa). Cystine bridges form between Cys1460–Cys1594, Cys1482–Cys1632, Cys1684–Cys1742, Cys1708–Cys1751, Cys1753–Cys1785, Cys1773–Cys1865, and Cys1804–Cys1824. 10 N-linked (GlcNAc...) asparagine glycosylation sites follow: Asn1511, Asn1537, Asn1723, Asn1739, Asn1761, Asn1818, Asn1831, Asn1847, Asn1887, and Asn1906. Positions 1772–2026 constitute a ZP domain; the sequence is TCKAAQMEVS…YSCKINCPQH (255 aa). Intrachain disulfides connect Cys1947–Cys2007, Cys1968–Cys2023, and Cys2012–Cys2019. The GPI-anchor amidated asparagine moiety is linked to residue Asn2058. A propeptide spans 2059-2120 (removed in mature form); it reads GGCEQICTSQ…LWAALHDPTS (62 aa).

As to quaternary structure, may form homomeric filament after self-association or heteromeric filament after association with beta-tectorin. In terms of processing, at least 3 products of tectorin seem to exist: HMM, MMM and LMM. They may be generated by active processing or the result of proteolysis occurring between intrachain disulfide bonds. Post-translationally, the presence of a hydrophobic C-terminus preceded by a potential cleavage site strongly suggests that tectorins are synthesized as glycosylphosphatidylinositol-linked, membrane-bound precursors. Tectorins are targeted to the apical surface of the inner ear epithelia by the lipid and proteolytically released into the extracellular compartment. Expressed in the inner ear.

It is found in the cell membrane. It localises to the secreted. Its subcellular location is the extracellular space. The protein resides in the extracellular matrix. One of the major non-collagenous components of the tectorial membrane. The tectorial membrane is an extracellular matrix of the inner ear that covers the neuroepithelium of the cochlea and contacts the stereocilia bundles of specialized sensory hair cells. Sound induces movement of these hair cells relative to the tectorial membrane, deflects the stereocilia and leads to fluctuations in hair-cell membrane potential, transducing sound into electrical signals. The polypeptide is Alpha-tectorin (TECTA) (Gallus gallus (Chicken)).